The sequence spans 472 residues: Ammonium transporter Rh type C (472 aa).

Topologically, residues 1–9 (MAWNTNLRW) are cytoplasmic. Residues 10–30 (RLPLTCLLLEVVMVILFGVFV) form a helical membrane-spanning segment. The Extracellular portion of the chain corresponds to 31–51 (RYDFDADAHWWSWRTEFYYRY). The helical transmembrane segment at 52–72 (PSFQDVHVMVFVGFGFLMTFL) threads the bilayer. The Cytoplasmic segment spans residues 73–76 (QRYG). Residues 77 to 97 (FSAVGFNFLLAAFGIQWALLM) form a helical membrane-spanning segment. At 98-114 (QGWFHFLQGRYIVVGVE) the chain is on the extracellular side. Residues 115 to 135 (NLINADFCVASVCVAFGAVLG) form a helical membrane-spanning segment. Over 136–139 (KVSP) the chain is Cytoplasmic. A helical transmembrane segment spans residues 140 to 160 (IQLLIMTFFQVTLFAVNEFIL). The Extracellular portion of the chain corresponds to 161–168 (LNLLKVKD). The helical transmembrane segment at 169 to 191 (AGGSMTIHTFGAYFGLTVTRILY) threads the bilayer. The Cytoplasmic segment spans residues 192 to 209 (RRNLEQSKERQNSVYQSD). The chain crosses the membrane as a helical span at residues 210–230 (LFAMIGTLFLWMYWPSFNSAI). Residues 231-241 (SYHGDSQHRAA) lie on the Extracellular side of the membrane. Residues 242-262 (INTYCSLAACVLTSVAISSAL) traverse the membrane as a helical segment. At 263-294 (HKKGKLDMVHIQNATPAGGVAVGTAAEMMLMP) the chain is on the cytoplasmic side. A helical transmembrane segment spans residues 295–315 (YGALIVGFVCGIISTLGFVYL). The Extracellular portion of the chain corresponds to 316 to 336 (TPFLESRLHIQDTCGINNLHG). The helical transmembrane segment at 337–357 (IPGIIGGIVGAVTAASASLEV) threads the bilayer. The Cytoplasmic portion of the chain corresponds to 358 to 388 (YGKEGLVHSFDFQGFKRDWTARTQGKFQIYG). The chain crosses the membrane as a helical span at residues 389–409 (LLVTLAMALMGGIIVGVGLIL). Residues 410–450 (RLPFWGQPSDENCFEDAVYWEMPEGNSTVYIPEDPTFKPSG) are Extracellular-facing. N-linked (GlcNAc...) asparagine glycosylation occurs at Asn-435. Residues 451-471 (PSVPSVPMVSPLPMASSVPLV) traverse the membrane as a helical segment. A topological domain (cytoplasmic) is located at residue Pro-472.

The protein belongs to the ammonium transporter (TC 2.A.49) family. Rh subfamily. As to quaternary structure, homotrimer. In terms of processing, N-glycosylated.

It localises to the cell membrane. The protein resides in the apical cell membrane. The enzyme catalyses NH4(+)(in) = NH4(+)(out). It carries out the reaction methylamine(out) = methylamine(in). It catalyses the reaction CO2(out) = CO2(in). Its function is as follows. Ammonium transporter involved in the maintenance of acid-base homeostasis. Transports ammonium and its related derivative methylammonium across the plasma membrane of epithelial cells likely contributing to renal transepithelial ammonia transport and ammonia metabolism. Postulated to primarily mediate an electroneutral bidirectional transport of NH3 ammonia species according to a mechanism that implies interaction of an NH4(+) ion with acidic residues of the pore entry followed by dissociation of NH4(+) into NH3 and H(+). As a result NH3 transits through the central pore and is protonated on the extracellular side reforming NH4(+). May act as a CO2 channel providing for renal acid secretion. The sequence is that of Ammonium transporter Rh type C (RHCG) from Pongo abelii (Sumatran orangutan).